The primary structure comprises 234 residues: 1-(5-phosphoribosyl)-5-[(5-phosphoribosylamino)methylideneamino] imidazole-4-carboxamide isomerase (234 aa).

Catalysis depends on Asp9, which acts as the Proton acceptor. Catalysis depends on Asp131, which acts as the Proton donor.

This sequence belongs to the HisA/HisF family.

The protein resides in the cytoplasm. The catalysed reaction is 1-(5-phospho-beta-D-ribosyl)-5-[(5-phospho-beta-D-ribosylamino)methylideneamino]imidazole-4-carboxamide = 5-[(5-phospho-1-deoxy-D-ribulos-1-ylimino)methylamino]-1-(5-phospho-beta-D-ribosyl)imidazole-4-carboxamide. Its pathway is amino-acid biosynthesis; L-histidine biosynthesis; L-histidine from 5-phospho-alpha-D-ribose 1-diphosphate: step 4/9. In Staphylococcus epidermidis (strain ATCC 12228 / FDA PCI 1200), this protein is 1-(5-phosphoribosyl)-5-[(5-phosphoribosylamino)methylideneamino] imidazole-4-carboxamide isomerase.